A 479-amino-acid chain; its full sequence is UDP-glycosyltransferase 71B6 (479 aa).

Residues Ser275, 342 to 344 (AEQ), 359 to 367 (HGGWNSTLE), and 381 to 384 (YAEQ) each bind UDP-alpha-D-glucose.

The protein belongs to the UDP-glycosyltransferase family.

In terms of biological role, glucosyltransferase that glucosylates the (+) enantiomer of abscisic acid ((+)-ABA). Is not active on structural analogs with alterations to the 8'- and 9'- methyl groups. This chain is UDP-glycosyltransferase 71B6 (UGT71B6), found in Arabidopsis thaliana (Mouse-ear cress).